The primary structure comprises 53 residues: uncharacterized protein (53 aa).

The chain crosses the membrane as a helical span at residues 20 to 42 (ILFPVLLVFDTILIVVGIALILF).

Its subcellular location is the membrane. This is an uncharacterized protein from Archaeoglobus fulgidus (strain ATCC 49558 / DSM 4304 / JCM 9628 / NBRC 100126 / VC-16).